Consider the following 550-residue polypeptide: Hydroxylamine reductase (550 aa).

[2Fe-2S] cluster is bound by residues cysteine 3, cysteine 6, cysteine 18, and cysteine 25. Residues histidine 249, glutamate 273, cysteine 317, cysteine 405, cysteine 433, cysteine 458, glutamate 492, and lysine 494 each coordinate hybrid [4Fe-2O-2S] cluster. Cysteine 405 carries the post-translational modification Cysteine persulfide.

The protein belongs to the HCP family. Requires [2Fe-2S] cluster as cofactor. The cofactor is hybrid [4Fe-2O-2S] cluster.

The protein localises to the cytoplasm. The enzyme catalyses A + NH4(+) + H2O = hydroxylamine + AH2 + H(+). In terms of biological role, catalyzes the reduction of hydroxylamine to form NH(3) and H(2)O. The sequence is that of Hydroxylamine reductase from Yersinia pseudotuberculosis serotype IB (strain PB1/+).